A 348-amino-acid chain; its full sequence is Ileal sodium/bile acid cotransporter (348 aa).

Topologically, residues 1-28 are extracellular; the sequence is MDNSSVCPPNATVCEGDSCVVPESNFNA. N-linked (GlcNAc...) asparagine glycans are attached at residues Asn3 and Asn10. A helical transmembrane segment spans residues 29–49; that stretch reads ILNTVMSTVLTILLAMVMFSM. Over 50–87 the chain is Cytoplasmic; that stretch reads GCNVEVHKFLGHIKRPWGIFVGFLCQFGIMPLTGFILS. The helical transmembrane segment at 88-108 threads the bilayer; sequence VASGILPVQAVVVLIMGCCPG. Over 109 to 126 the chain is Extracellular; sequence GTGSNILAYWIDGDMDLS. Residues 127–147 form a helical membrane-spanning segment; it reads VSMTTCSTLLALGMMPLCLFV. The Cytoplasmic segment spans residues 148 to 157; the sequence is YTKMWVDSGT. The helical transmembrane segment at 158–178 threads the bilayer; sequence IVIPYDSIGISLVALVIPVSF. Residues 179–195 are Extracellular-facing; that stretch reads GMFVNHKWPQKAKIILK. Residues 196–216 form a helical membrane-spanning segment; the sequence is IGSITGVILIVLIAVIGGILY. The Cytoplasmic segment spans residues 217–224; sequence QSAWIIEP. Residues 225–245 traverse the membrane as a helical segment; sequence KLWIIGTIFPIAGYSLGFFLA. Residues 246 to 284 lie on the Extracellular side of the membrane; that stretch reads RLAGQPWYRCRTVALETGMQNTQLCSTIVQLSFSPEDLN. The helical transmembrane segment at 285–305 threads the bilayer; that stretch reads LVFTFPLIYTVFQLVFAAVIL. The Cytoplasmic portion of the chain corresponds to 306-348; that stretch reads GIYVTYRKCYGKNDAEFLEKTDNEMDSRPSFDETNKGFQPDEK. Residues 328 to 348 form a disordered region; sequence NEMDSRPSFDETNKGFQPDEK. At Ser335 the chain carries Phosphoserine.

This sequence belongs to the bile acid:sodium symporter (BASS) (TC 2.A.28) family. In terms of assembly, monomer and homodimer. In terms of tissue distribution, expressed in ileum.

The protein localises to the membrane. It catalyses the reaction taurocholate(out) + 2 Na(+)(out) = taurocholate(in) + 2 Na(+)(in). The enzyme catalyses cholate(out) + 2 Na(+)(out) = cholate(in) + 2 Na(+)(in). The catalysed reaction is taurochenodeoxycholate(out) + 2 Na(+)(out) = taurochenodeoxycholate(in) + 2 Na(+)(in). It carries out the reaction tauroursodeoxycholate(out) + 2 Na(+)(out) = tauroursodeoxycholate(in) + 2 Na(+)(in). It catalyses the reaction glycocholate(out) + 2 Na(+)(out) = glycocholate(in) + 2 Na(+)(in). The enzyme catalyses tauronorcholate(out) + 2 Na(+)(out) = tauronorcholate(in) + 2 Na(+)(in). The catalysed reaction is tauroallocholate(out) + 2 Na(+)(out) = tauroallocholate(in) + 2 Na(+)(in). It carries out the reaction taurodeoxycholate(out) + 2 Na(+)(out) = taurodeoxycholate(in) + 2 Na(+)(in). It catalyses the reaction tauro-beta-muricholate(out) + 2 Na(+)(out) = tauro-beta-muricholate(in) + 2 Na(+)(in). In terms of biological role, plays a critical role in the sodium-dependent reabsorption of bile acids from the lumen of the small intestine. Transports various bile acids, unconjugated or conjugated, such as cholate and taurocholate. Also responsible for bile acid transport in the renal proximal tubules, a salvage mechanism that helps conserve bile acids. Works collaboratively with the Na(+)-taurocholate cotransporting polypeptide (NTCP), the organic solute transporter (OST), and the bile salt export pump (BSEP), to ensure efficacious biological recycling of bile acids during enterohepatic circulation. This is Ileal sodium/bile acid cotransporter (Slc10a2) from Mus musculus (Mouse).